The following is a 330-amino-acid chain: Glycoprotein integral membrane protein 1 (330 aa).

The N-terminal stretch at 1–23 is a signal peptide; the sequence is MEGAPLGPLALRLLLFVALPASG. Over 24–268 the chain is Extracellular; that stretch reads WLTTGAPEPP…VFPVFFQFLN (245 aa). 4 N-linked (GlcNAc...) asparagine glycosylation sites follow: Asn46, Asn64, Asn166, and Asn191. A helical membrane pass occupies residues 269-289; the sequence is IMVVGITGAAVVITILKVLFP. The Cytoplasmic portion of the chain corresponds to 290–330; that stretch reads VSEYKGILQLDKVDVIPVTAINLYPDGPEKTAENLEDKTCI.

It localises to the membrane. This chain is Glycoprotein integral membrane protein 1 (GINM1), found in Pongo abelii (Sumatran orangutan).